Reading from the N-terminus, the 217-residue chain is Phosphatidylserine decarboxylase proenzyme (217 aa).

The active-site Schiff-base intermediate with substrate; via pyruvic acid is the Ser182. Ser182 is modified (pyruvic acid (Ser); by autocatalysis).

The protein belongs to the phosphatidylserine decarboxylase family. PSD-A subfamily. Heterodimer of a large membrane-associated beta subunit and a small pyruvoyl-containing alpha subunit. Requires pyruvate as cofactor. Post-translationally, is synthesized initially as an inactive proenzyme. Formation of the active enzyme involves a self-maturation process in which the active site pyruvoyl group is generated from an internal serine residue via an autocatalytic post-translational modification. Two non-identical subunits are generated from the proenzyme in this reaction, and the pyruvate is formed at the N-terminus of the alpha chain, which is derived from the carboxyl end of the proenzyme. The post-translation cleavage follows an unusual pathway, termed non-hydrolytic serinolysis, in which the side chain hydroxyl group of the serine supplies its oxygen atom to form the C-terminus of the beta chain, while the remainder of the serine residue undergoes an oxidative deamination to produce ammonia and the pyruvoyl prosthetic group on the alpha chain.

It is found in the cell membrane. The catalysed reaction is a 1,2-diacyl-sn-glycero-3-phospho-L-serine + H(+) = a 1,2-diacyl-sn-glycero-3-phosphoethanolamine + CO2. Its pathway is phospholipid metabolism; phosphatidylethanolamine biosynthesis; phosphatidylethanolamine from CDP-diacylglycerol: step 2/2. Its function is as follows. Catalyzes the formation of phosphatidylethanolamine (PtdEtn) from phosphatidylserine (PtdSer). This chain is Phosphatidylserine decarboxylase proenzyme, found in Nitratidesulfovibrio vulgaris (strain ATCC 29579 / DSM 644 / CCUG 34227 / NCIMB 8303 / VKM B-1760 / Hildenborough) (Desulfovibrio vulgaris).